A 1301-amino-acid chain; its full sequence is Tyrosine-protein phosphatase 99A (1301 aa).

Residues 1 to 28 (MPRPQHHALLRAMLKLLLFASIAEHCAT) form the signal peptide. At 29-394 (ALPTNSSNSP…RQSHNDYNLA (366 aa)) the chain is on the extracellular side. A disordered region spans residues 31–63 (PTNSSNSPSSPSPFTVASLPPTTASSSSSPAVI). N33 carries N-linked (GlcNAc...) asparagine glycosylation. Positions 33-63 (NSSNSPSSPSPFTVASLPPTTASSSSSPAVI) are enriched in low complexity. 3 consecutive Fibronectin type-III domains span residues 66 to 165 (SSFD…YAAV), 173 to 269 (KPQN…TDVG), and 270 to 376 (GPSA…LQPN). Residues N176, N212, N278, N322, and N336 are each glycosylated (N-linked (GlcNAc...) asparagine). A helical membrane pass occupies residues 395–415 (VLVGIIFSCFGIILIIMAFFL). The Cytoplasmic portion of the chain corresponds to 416–1301 (WSRKCFHAAY…TDAQNLDIVG (886 aa)). Tyrosine-protein phosphatase domains are found at residues 476–741 (FSRE…LVEA) and 764–1016 (LEQQ…LSFL). The Phosphocysteine intermediate role is filled by C682. A compositionally biased stretch (polar residues) spans 1092–1106 (TALNETVSTPSTDTN). Disordered stretches follow at residues 1092–1199 (TALN…PTIP) and 1257–1281 (VGDL…NNHI). Positions 1107-1130 (PSLLPILSLLPPTVAPLSSSSSTT) are enriched in low complexity. Residues 1131–1142 (PPTPSTPTPQPP) are compositionally biased toward pro residues. The segment covering 1150 to 1161 (HSPSDLSHQISS) has biased composition (polar residues). Low complexity predominate over residues 1162–1188 (TVANAASPVTPATASASAGATPTTPMT). Residues 1264–1273 (NADNSPTASP) show a composition bias toward polar residues.

Belongs to the protein-tyrosine phosphatase family. Receptor class subfamily. In terms of tissue distribution, selectively expressed in a subset of axons and pioneer neurons (including aCC and RP2) in the embryo.

The protein resides in the membrane. The enzyme catalyses O-phospho-L-tyrosyl-[protein] + H2O = L-tyrosyl-[protein] + phosphate. In terms of biological role, may play a key role in signal transduction and growth control. May have a role in the establishment of the intersegmental and segmental nerves. The sequence is that of Tyrosine-protein phosphatase 99A (Ptp99A) from Drosophila melanogaster (Fruit fly).